Consider the following 174-residue polypeptide: Large ribosomal subunit protein uL18 (174 aa).

Belongs to the universal ribosomal protein uL18 family. As to quaternary structure, part of the 50S ribosomal subunit. Contacts the 5S and 23S rRNAs.

Its function is as follows. This is one of the proteins that bind and probably mediate the attachment of the 5S RNA into the large ribosomal subunit, where it forms part of the central protuberance. This Methanosarcina acetivorans (strain ATCC 35395 / DSM 2834 / JCM 12185 / C2A) protein is Large ribosomal subunit protein uL18.